The following is a 163-amino-acid chain: Succinate dehydrogenase assembly factor 2-A, mitochondrial (163 aa).

Residues 1–23 constitute a mitochondrion transit peptide; that stretch reads MLRQLRLTMDISGWIFLPWRRSM.

This sequence belongs to the SDHAF2 family. As to quaternary structure, interacts with the flavoprotein subunit within the SDH catalytic dimer.

It is found in the mitochondrion matrix. Its function is as follows. Plays an essential role in the assembly of succinate dehydrogenase (SDH), an enzyme complex (also referred to as respiratory complex II) that is a component of both the tricarboxylic acid (TCA) cycle and the mitochondrial electron transport chain, and which couples the oxidation of succinate to fumarate with the reduction of ubiquinone (coenzyme Q) to ubiquinol. Required for flavinylation (covalent attachment of FAD) of the flavoprotein subunit of the SDH catalytic dimer. This Drosophila sechellia (Fruit fly) protein is Succinate dehydrogenase assembly factor 2-A, mitochondrial.